The following is a 201-amino-acid chain: METIVLAVEPRTCSKNEAKTLRTEGKVPAVVYHNGEDNQHICVNELALEKLVHSPESHIINLEFPDGKNRRSLIKDVQFDPVTDKVIHADFQFFSAGEVLEMEVPVTFTGKGPGIEAGGRLQALVHALTVKGVPSSIPDHITLDISAMELGETMHIKEIPAEIAAGKFEFVGEPETPVVSITAPRVEAEKTEEEEPESTEE.

A disordered region spans residues 179–201 (VSITAPRVEAEKTEEEEPESTEE). The segment covering 190–201 (KTEEEEPESTEE) has biased composition (acidic residues).

The protein belongs to the bacterial ribosomal protein bL25 family. CTC subfamily. As to quaternary structure, part of the 50S ribosomal subunit; part of the 5S rRNA/L5/L18/L25 subcomplex. Contacts the 5S rRNA. Binds to the 5S rRNA independently of L5 and L18.

Its function is as follows. This is one of the proteins that binds to the 5S RNA in the ribosome where it forms part of the central protuberance. The sequence is that of Large ribosomal subunit protein bL25 from Prosthecochloris aestuarii (strain DSM 271 / SK 413).